Consider the following 642-residue polypeptide: Threonine--tRNA ligase (642 aa).

The region spanning 1-61 (MPIITLPDGS…TEDAELQLIT (61 aa)) is the TGS domain. A catalytic region spans residues 242–535 (DHRKLGKSLD…LVEHYEGKFP (294 aa)). 3 residues coordinate Zn(2+): cysteine 333, histidine 384, and histidine 512.

Belongs to the class-II aminoacyl-tRNA synthetase family. As to quaternary structure, homodimer. Zn(2+) is required as a cofactor.

The protein resides in the cytoplasm. The catalysed reaction is tRNA(Thr) + L-threonine + ATP = L-threonyl-tRNA(Thr) + AMP + diphosphate + H(+). In terms of biological role, catalyzes the attachment of threonine to tRNA(Thr) in a two-step reaction: L-threonine is first activated by ATP to form Thr-AMP and then transferred to the acceptor end of tRNA(Thr). Also edits incorrectly charged L-seryl-tRNA(Thr). This chain is Threonine--tRNA ligase, found in Hydrogenovibrio crunogenus (strain DSM 25203 / XCL-2) (Thiomicrospira crunogena).